A 542-amino-acid chain; its full sequence is CTP synthase (542 aa).

An amidoligase domain region spans residues 1–265; the sequence is MTRFIFITGG…DVQVCRHFHL (265 aa). A CTP-binding site is contributed by serine 13. Position 13 (serine 13) interacts with UTP. ATP contacts are provided by residues 14 to 19 and aspartate 71; that span reads SLGKGL. 2 residues coordinate Mg(2+): aspartate 71 and glutamate 139. Residues 146–148, 186–191, and lysine 222 each bind CTP; these read DIE and KTKPTQ. Residues 186–191 and lysine 222 each bind UTP; that span reads KTKPTQ. In terms of domain architecture, Glutamine amidotransferase type-1 spans 291–541; that stretch reads TIAVVGKYTS…VQAAITQSRL (251 aa). Glycine 353 is an L-glutamine binding site. The active-site Nucleophile; for glutamine hydrolysis is cysteine 380. Residues 381–384, glutamate 404, and arginine 469 each bind L-glutamine; that span reads FGMQ. Active-site residues include histidine 514 and glutamate 516.

This sequence belongs to the CTP synthase family. As to quaternary structure, homotetramer.

The enzyme catalyses UTP + L-glutamine + ATP + H2O = CTP + L-glutamate + ADP + phosphate + 2 H(+). It catalyses the reaction L-glutamine + H2O = L-glutamate + NH4(+). It carries out the reaction UTP + NH4(+) + ATP = CTP + ADP + phosphate + 2 H(+). It functions in the pathway pyrimidine metabolism; CTP biosynthesis via de novo pathway; CTP from UDP: step 2/2. With respect to regulation, allosterically activated by GTP, when glutamine is the substrate; GTP has no effect on the reaction when ammonia is the substrate. The allosteric effector GTP functions by stabilizing the protein conformation that binds the tetrahedral intermediate(s) formed during glutamine hydrolysis. Inhibited by the product CTP, via allosteric rather than competitive inhibition. In terms of biological role, catalyzes the ATP-dependent amination of UTP to CTP with either L-glutamine or ammonia as the source of nitrogen. Regulates intracellular CTP levels through interactions with the four ribonucleotide triphosphates. This Rhodospirillum rubrum (strain ATCC 11170 / ATH 1.1.1 / DSM 467 / LMG 4362 / NCIMB 8255 / S1) protein is CTP synthase.